The following is a 196-amino-acid chain: DnaA initiator-associating protein DiaA (196 aa).

Positions methionine 34–aspartate 196 constitute an SIS domain.

It belongs to the SIS family. DiaA subfamily. In terms of assembly, homotetramer; dimer of dimers.

Required for the timely initiation of chromosomal replication via direct interactions with the DnaA initiator protein. This Pectobacterium carotovorum subsp. carotovorum (strain PC1) protein is DnaA initiator-associating protein DiaA.